A 186-amino-acid chain; its full sequence is Cytochrome b6-f complex iron-sulfur subunit (186 aa).

Residues 16–38 (LLSFVTGGAIAATTAATLYPVVL) traverse the membrane as a helical segment. Positions 74 to 163 (GEPVLTLGLD…ATVSDDKVLI (90 aa)) constitute a Rieske domain. The [2Fe-2S] cluster site is built by cysteine 109, histidine 111, cysteine 127, and histidine 130. Cysteines 114 and 129 form a disulfide.

This sequence belongs to the Rieske iron-sulfur protein family. As to quaternary structure, the 4 large subunits of the cytochrome b6-f complex are cytochrome b6, subunit IV (17 kDa polypeptide, PetD), cytochrome f and the Rieske protein, while the 4 small subunits are PetG, PetL, PetM and PetN. The complex functions as a dimer. It depends on [2Fe-2S] cluster as a cofactor.

It is found in the cell inner membrane. The catalysed reaction is 2 oxidized [plastocyanin] + a plastoquinol + 2 H(+)(in) = 2 reduced [plastocyanin] + a plastoquinone + 4 H(+)(out). Functionally, component of the cytochrome b6-f complex, which mediates electron transfer between photosystem II (PSII) and photosystem I (PSI), cyclic electron flow around PSI, and state transitions. The chain is Cytochrome b6-f complex iron-sulfur subunit from Gloeobacter violaceus (strain ATCC 29082 / PCC 7421).